The sequence spans 110 residues: UPF0060 membrane protein Nmul_A0351 (110 aa).

4 consecutive transmembrane segments (helical) span residues 7–27 (LFLFLATALAEIVGCYLPYLW), 33–53 (SAWLLVPAAASLALFAWLLTL), 63–83 (AAYGGVYVSVAVLWLWAVDGV), and 87–107 (AWDMAGSLLALTGMAIIMFGP).

It belongs to the UPF0060 family.

The protein resides in the cell inner membrane. The protein is UPF0060 membrane protein Nmul_A0351 of Nitrosospira multiformis (strain ATCC 25196 / NCIMB 11849 / C 71).